A 377-amino-acid polypeptide reads, in one-letter code: MTTENFGFKVLARDGAARQGEISMPRGVVRTPAFMPVGTAGTVKAMYMDQVKELGADIILGNTYHLMLRPGAERVARLGGLHEFGGWKGPILTDSGGFQVMSLAQLRKLNEHGVTFRSHIDGKAYEMTPERSIEIQGLLDSDIQMQLDECVALPSPEKNTERAMELSLRWAERCKVAFGDQPGKAMFGIVQGGDIARLRERSAEALKAMDLKGYSVGGLAVGEPQEVMLDMLEVVCPILPTEKPRYLMGVGTPDDILKSVARGIDMFDCVMPTRAGRHGLAFTRFGKVNLRNARHAEDHRPLDPQSDCPASRDYSRAYLHHLVKSGEALGAMLLTWNNLAYYQYLMKGIRAAIADGNFSDFTAETTEGWARGDMPAL.

The Proton acceptor role is filled by D94. Substrate contacts are provided by residues 94–98, D148, Q191, and G218; that span reads DSGGF. The RNA binding stretch occupies residues 249–255; sequence GVGTPDD. The active-site Nucleophile is the D268. The interval 273–277 is RNA binding; important for wobble base 34 recognition; the sequence is TRAGR.

It belongs to the queuine tRNA-ribosyltransferase family. As to quaternary structure, homodimer. Within each dimer, one monomer is responsible for RNA recognition and catalysis, while the other monomer binds to the replacement base PreQ1.

It catalyses the reaction 7-aminomethyl-7-carbaguanine + guanosine(34) in tRNA = 7-aminomethyl-7-carbaguanosine(34) in tRNA + guanine. It participates in tRNA modification; tRNA-queuosine biosynthesis. Catalyzes the base-exchange of a guanine (G) residue with the queuine precursor 7-aminomethyl-7-deazaguanine (PreQ1) at position 34 (anticodon wobble position) in tRNAs with GU(N) anticodons (tRNA-Asp, -Asn, -His and -Tyr). Catalysis occurs through a double-displacement mechanism. The nucleophile active site attacks the C1' of nucleotide 34 to detach the guanine base from the RNA, forming a covalent enzyme-RNA intermediate. The proton acceptor active site deprotonates the incoming PreQ1, allowing a nucleophilic attack on the C1' of the ribose to form the product. After dissociation, two additional enzymatic reactions on the tRNA convert PreQ1 to queuine (Q), resulting in the hypermodified nucleoside queuosine (7-(((4,5-cis-dihydroxy-2-cyclopenten-1-yl)amino)methyl)-7-deazaguanosine). In Brucella suis biovar 1 (strain 1330), this protein is Queuine tRNA-ribosyltransferase.